We begin with the raw amino-acid sequence, 102 residues long: Small ribosomal subunit protein bS18 (102 aa).

Belongs to the bacterial ribosomal protein bS18 family. Part of the 30S ribosomal subunit. Forms a tight heterodimer with protein bS6.

Functionally, binds as a heterodimer with protein bS6 to the central domain of the 16S rRNA, where it helps stabilize the platform of the 30S subunit. This chain is Small ribosomal subunit protein bS18, found in Orientia tsutsugamushi (strain Ikeda) (Rickettsia tsutsugamushi).